The chain runs to 291 residues: Probable plasmid-partitioning protein ParB (291 aa).

This sequence belongs to the ParB family.

The sequence is that of Probable plasmid-partitioning protein ParB from Deinococcus radiodurans (strain ATCC 13939 / DSM 20539 / JCM 16871 / CCUG 27074 / LMG 4051 / NBRC 15346 / NCIMB 9279 / VKM B-1422 / R1).